The primary structure comprises 377 residues: Iris (377 aa).

N-linked (GlcNAc...) asparagine glycosylation is found at Asn11 and Asn226.

This sequence belongs to the serpin family. Female saliva (at protein level). Female salivary gland (at protein level).

It localises to the secreted. Serine protease inhibitor with anticoagulant and immunosuppressive properties that can modulate blood feeding of ticks on vertebrate species. Strongly inhibits human leukocyte elastase (ELANE) and porcine pancreatic elastase. Moderately inhibits human tPA/tissue-type plasminogen activator (PLAT), coagulation factor Xa (F10), thrombin (F2) and trypsin. Does not inhibit human plasmin (PLG). Inhibits platelet aggregation. Inhibits the intrinsic pathway of blood coagulation in the host. Inhibits fibrinolysis in the host. Inhibits proliferation of mouse splenocytes. Decreases the number of IFN-gamma (IFNG)-producing human peripheral blood mononuclear cells (PBMCs) after stimulation with phytohemagglutinin A (PHA). Increases the number of IL10-producing human PBMCs after stimulation with lipopolysaccharides (LPS) with no significant effect on IL10 production. Inhibits production of IFNG, IL6, TNF-alpha (TNF) and CXCL8 by human PBMCs. Binds to monocyte/macrophage subpopulation of the host PBMCs. Increases both survival rate and survival time in mice with LPS-induced endotoxemic shock. This is Iris from Ixodes ricinus (Common tick).